Consider the following 656-residue polypeptide: CXXC-type zinc finger protein 1 (656 aa).

An N-acetylmethionine modification is found at Met1. Over residues 1–14 the composition is skewed to acidic residues; the sequence is MEGDGSDPEPPDAG. The tract at residues 1–20 is disordered; the sequence is MEGDGSDPEPPDAGEDSKSE. 2 positions are modified to phosphoserine: Ser6 and Ser19. The segment at 28–76 adopts a PHD-type zinc-finger fold; sequence YCICRKPDINCFMIGCDNCNEWFHGDCIRITEKMAKAIREWYCRECREK. Residues 84 to 162 form a disordered region; it reads YRHKKSRERD…QHHQQQQQQI (79 aa). Positions 90-120 are enriched in basic and acidic residues; the sequence is RERDGNERDSSEPRDEGGGRKRPVPDPDLQR. At Ser124 the chain carries Phosphoserine. The segment at 160–209 adopts a CXXC-type zinc-finger fold; sequence QQIKRSARMCGECEACRRTEDCGHCDFCRDMKKFGGPNKIRQKCRLRQCQ. Positions 169, 172, 175, 181, 184, 187, 203, and 208 each coordinate Zn(2+). Disordered stretches follow at residues 219 to 287 and 311 to 373; these read FPSS…LPLD and EESP…ASLP. Ser224 is subject to Phosphoserine. A Phosphothreonine modification is found at Thr227. The span at 239–249 shows a compositional bias: low complexity; that stretch reads LPTQQQPQPSQ. A Glycyl lysine isopeptide (Lys-Gly) (interchain with G-Cter in SUMO2) cross-link involves residue Lys250. The span at 321–334 shows a compositional bias: basic residues; it reads RKRAVKVKHVKRRE. The segment covering 335-345 has biased composition (basic and acidic residues); that stretch reads KKSEKKKEERY. The span at 346–358 shows a compositional bias: basic residues; that stretch reads KRHRQKQKHKDKW. The segment covering 359–368 has biased composition (basic and acidic residues); that stretch reads KHPERADAKD. Residues 422–474 adopt a coiled-coil conformation; the sequence is AEEHGKKLLERIRREQQSARTRLQEMERRFHELEAIILRAKQQAVREDEESNE.

As to quaternary structure, component of the SET1 complex, at least composed of the catalytic subunit (SETD1A or SETD1B), WDR5, WDR82, RBBP5, ASH2L/ASH2, CXXC1/CFP1 HCFC1 and DPY30. Interacts with SETD1A. Interacts with ZNF335. Interacts with PRDM9; this interaction does not link PRDM9-activated recombination hotspot sites with DSB machinery and is not required for the hotspot recognition pathway. Interacts with histone H3K4me3. In terms of processing, may be regulated by proteolysis. In terms of tissue distribution, ubiquitous.

It is found in the nucleus speckle. The protein localises to the nucleus. In terms of biological role, transcriptional activator that exhibits a unique DNA binding specificity for CpG unmethylated motifs with a preference for CpGG. This Homo sapiens (Human) protein is CXXC-type zinc finger protein 1 (CXXC1).